The chain runs to 540 residues: Chaperonin GroEL (540 aa).

ATP-binding positions include 29 to 32 (TLGP), 86 to 90 (DGTTT), glycine 413, and aspartate 493. The segment at 520-540 (AEKPEPKPAPGPADPGAGMDF) is disordered.

It belongs to the chaperonin (HSP60) family. As to quaternary structure, forms a cylinder of 14 subunits composed of two heptameric rings stacked back-to-back. Interacts with the co-chaperonin GroES.

The protein localises to the cytoplasm. It catalyses the reaction ATP + H2O + a folded polypeptide = ADP + phosphate + an unfolded polypeptide.. In terms of biological role, together with its co-chaperonin GroES, plays an essential role in assisting protein folding. The GroEL-GroES system forms a nano-cage that allows encapsulation of the non-native substrate proteins and provides a physical environment optimized to promote and accelerate protein folding. The chain is Chaperonin GroEL from Tropheryma whipplei (Whipple's bacillus).